The sequence spans 360 residues: MKPSMLSKLDQLAERIVEINALLAREDATANLDQYRKLTREHAELEPVVAQFAAWKQAEEDIATAQELAADPDMKAFAEDELRAARERMESLEGELQRLLLPKDPNDHRNIFVEIRAGTGGDESALFAGDLLRMYTRYAERQRWQVEIVSESPSDLGGYKEVIARLVGEGAYSRLKFESGGHRVQRVPATEAQGRIHTSACTVAVMPEADALADIQINPADLRIDTFRASGAGGQHINKTDSAVRITHLPTGLVVECQDDRSQHRNKDRAMQVLAARLKDRQEREAQAKEASARKSLIGSGDRSDRIRTYNFPQGRVTDHRINLTLYKIDAIMDGDIDELVGALAAEHQAEQLAALGEDA.

Residue Gln-235 is modified to N5-methylglutamine. Residues 283–293 (EREAQAKEASA) show a composition bias toward basic and acidic residues. The tract at residues 283–305 (EREAQAKEASARKSLIGSGDRSD) is disordered.

This sequence belongs to the prokaryotic/mitochondrial release factor family. Post-translationally, methylated by PrmC. Methylation increases the termination efficiency of RF1.

Its subcellular location is the cytoplasm. Peptide chain release factor 1 directs the termination of translation in response to the peptide chain termination codons UAG and UAA. The polypeptide is Peptide chain release factor 1 (Ralstonia pickettii (strain 12J)).